The primary structure comprises 93 residues: YcgL domain-containing protein Spea_2443 (93 aa).

One can recognise a YcgL domain in the interval 1–85 (MICAVYKSLR…PVVNLLEQHK (85 aa)).

The polypeptide is YcgL domain-containing protein Spea_2443 (Shewanella pealeana (strain ATCC 700345 / ANG-SQ1)).